The sequence spans 188 residues: Anaphase-promoting complex subunit 10 (188 aa).

The DOC domain maps to 4-187 (NSNINSNSRL…SPEVSMFQTL (184 aa)).

The protein belongs to the APC10 family. The APC/C is composed of at least 13 subunits that stay tightly associated throughout the cell cycle: anapc1, anapc2, anapc3, anapc4, anapc5, anapc6, anapc7, anapc8, anapc10, anapc11, cdc20, cdc26 and cdh1.

Its subcellular location is the nucleus. Its pathway is protein modification; protein ubiquitination. In terms of biological role, component of the anaphase promoting complex/cyclosome (APC/C), a cell cycle-regulated E3 ubiquitin-protein ligase complex that controls progression through mitosis and the G1 phase of the cell cycle. The polypeptide is Anaphase-promoting complex subunit 10 (anapc10) (Dictyostelium discoideum (Social amoeba)).